The sequence spans 358 residues: Tripartite motif-containing protein 54 (358 aa).

An RING-type zinc finger spans residues 26-82 (CPICLEMFSKPVVILPCQHNLCRKCANDVFQASNPLWQSRGSTTVSSGGRFRCPSCR). Residues 121–163 (EQHLMCEEHEEEKINIYCLSCEVPTCSLCKVFGAHKDCEVAPL) form a B box-type zinc finger. Residues Cys-126, His-129, Cys-149, and His-155 each coordinate Zn(2+). A mediates microtubule-binding and homooligomerization region spans residues 168–211 (KRQKSELSDGIAMLVAGNDRVQAVITQMEEVCQTIEDNSRRQKQ). Residues 194–258 (QMEEVCQTIE…LIRQYGDHLE (65 aa)) are a coiled coil. The COS domain maps to 271–329 (MEEPQMALYLQQAKELINKVGAMSKVELAGRPEPGYESMEQFTVSVEHVAEMLRTIDFQ). A disordered region spans residues 326–358 (IDFQPGASGEEEEVAPDGDEGSAGQEEERPDGP). Acidic residues predominate over residues 334-345 (GEEEEVAPDGDE).

In terms of assembly, homooligomer and heterooligomer. Interacts with TRIM63 and probably with TRIM55. Interacts with tubulin.

The protein localises to the cytoplasm. It localises to the cytoskeleton. The protein resides in the myofibril. Its subcellular location is the sarcomere. It is found in the z line. May bind and stabilize microtubules during myotubes formation. The polypeptide is Tripartite motif-containing protein 54 (TRIM54) (Pongo abelii (Sumatran orangutan)).